The chain runs to 357 residues: 3-dehydroquinate synthase (357 aa).

NAD(+)-binding positions include G104 to D108, T128 to T129, K141, and F168 to T171. Zn(2+) contacts are provided by E183, H243, and H260.

The protein belongs to the sugar phosphate cyclases superfamily. Dehydroquinate synthase family. Co(2+) serves as cofactor. The cofactor is Zn(2+). It depends on NAD(+) as a cofactor.

It localises to the cytoplasm. It carries out the reaction 7-phospho-2-dehydro-3-deoxy-D-arabino-heptonate = 3-dehydroquinate + phosphate. The protein operates within metabolic intermediate biosynthesis; chorismate biosynthesis; chorismate from D-erythrose 4-phosphate and phosphoenolpyruvate: step 2/7. In terms of biological role, catalyzes the conversion of 3-deoxy-D-arabino-heptulosonate 7-phosphate (DAHP) to dehydroquinate (DHQ). In Streptococcus pyogenes serotype M49 (strain NZ131), this protein is 3-dehydroquinate synthase.